We begin with the raw amino-acid sequence, 209 residues long: Ribosomal RNA small subunit methyltransferase G (209 aa).

Residues Gly75, Leu80, 126–127, and Arg141 contribute to the S-adenosyl-L-methionine site; that span reads VE.

Belongs to the methyltransferase superfamily. RNA methyltransferase RsmG family.

It is found in the cytoplasm. The enzyme catalyses guanosine(527) in 16S rRNA + S-adenosyl-L-methionine = N(7)-methylguanosine(527) in 16S rRNA + S-adenosyl-L-homocysteine. Its function is as follows. Specifically methylates the N7 position of guanine in position 527 of 16S rRNA. The sequence is that of Ribosomal RNA small subunit methyltransferase G from Colwellia psychrerythraea (strain 34H / ATCC BAA-681) (Vibrio psychroerythus).